The primary structure comprises 169 residues: UPF0398 protein Spy49_1277c (169 aa).

The protein belongs to the UPF0398 family.

In Streptococcus pyogenes serotype M49 (strain NZ131), this protein is UPF0398 protein Spy49_1277c.